We begin with the raw amino-acid sequence, 250 residues long: Phosphoribosylaminoimidazole-succinocarboxamide synthase (250 aa).

This sequence belongs to the SAICAR synthetase family.

The catalysed reaction is 5-amino-1-(5-phospho-D-ribosyl)imidazole-4-carboxylate + L-aspartate + ATP = (2S)-2-[5-amino-1-(5-phospho-beta-D-ribosyl)imidazole-4-carboxamido]succinate + ADP + phosphate + 2 H(+). It participates in purine metabolism; IMP biosynthesis via de novo pathway; 5-amino-1-(5-phospho-D-ribosyl)imidazole-4-carboxamide from 5-amino-1-(5-phospho-D-ribosyl)imidazole-4-carboxylate: step 1/2. The sequence is that of Phosphoribosylaminoimidazole-succinocarboxamide synthase from Bifidobacterium longum subsp. infantis (strain ATCC 15697 / DSM 20088 / JCM 1222 / NCTC 11817 / S12).